Consider the following 312-residue polypeptide: 2,3-dihydroxyphenylpropionate/2,3-dihydroxicinnamic acid 1,2-dioxygenase (312 aa).

H115 functions as the Proton donor in the catalytic mechanism. The Proton acceptor role is filled by H179.

Belongs to the LigB/MhpB extradiol dioxygenase family. Homotetramer. The cofactor is Fe(2+).

It carries out the reaction 3-(2,3-dihydroxyphenyl)propanoate + O2 = (2Z,4E)-2-hydroxy-6-oxonona-2,4-dienedioate + H(+). The catalysed reaction is (2E)-3-(2,3-dihydroxyphenyl)prop-2-enoate + O2 = (2Z,4E,7E)-2-hydroxy-6-oxonona-2,4,7-trienedioate + H(+). Its pathway is aromatic compound metabolism; 3-phenylpropanoate degradation. Catalyzes the non-heme iron(II)-dependent oxidative cleavage of 2,3-dihydroxyphenylpropionic acid and 2,3-dihydroxicinnamic acid into 2-hydroxy-6-ketononadienedioate and 2-hydroxy-6-ketononatrienedioate, respectively. The protein is 2,3-dihydroxyphenylpropionate/2,3-dihydroxicinnamic acid 1,2-dioxygenase of Azotobacter vinelandii (strain DJ / ATCC BAA-1303).